The sequence spans 589 residues: Vesicular glutamate transporter 3 (589 aa).

At methionine 1–tyrosine 76 the chain is on the cytoplasmic side. The span at threonine 40–asparagine 49 shows a compositional bias: acidic residues. The segment at threonine 40–serine 61 is disordered. The helical transmembrane segment at isoleucine 77–glycine 97 threads the bilayer. Topologically, residues valine 98–glycine 130 are vesicular. The N-linked (GlcNAc...) asparagine glycan is linked to asparagine 106. The chain crosses the membrane as a helical span at residues leucine 131–serine 151. The Cytoplasmic segment spans residues asparagine 152–lysine 153. The helical transmembrane segment at phenylalanine 154–isoleucine 174 threads the bilayer. At proline 175 to tyrosine 182 the chain is on the vesicular side. A helical membrane pass occupies residues glycine 183–cysteine 203. Residues histidine 204–threonine 221 are Cytoplasmic-facing. Residues threonine 222 to valine 242 form a helical membrane-spanning segment. Residues glutamine 243–serine 249 are Vesicular-facing. The chain crosses the membrane as a helical span at residues valine 250–tyrosine 270. The Cytoplasmic segment spans residues glutamate 271–leucine 314. Residues proline 315–isoleucine 335 traverse the membrane as a helical segment. The Vesicular portion of the chain corresponds to serine 336–glycine 353. The chain crosses the membrane as a helical span at residues leucine 354–alanine 374. Topologically, residues aspartate 375 to lysine 390 are cytoplasmic. A helical transmembrane segment spans residues isoleucine 391–histidine 411. Residues threonine 412–lysine 413 are Vesicular-facing. A helical transmembrane segment spans residues glycine 414–phenylalanine 434. At asparagine 435–serine 447 the chain is on the cytoplasmic side. The chain crosses the membrane as a helical span at residues isoleucine 448–valine 468. Topologically, residues glycine 469 to glutamine 481 are vesicular. Residues asparagine 482–alanine 502 form a helical membrane-spanning segment. Topologically, residues serine 503–serine 586 are cytoplasmic. Residues lysine 559–serine 589 form a disordered region. The segment covering asparagine 580–serine 589 has biased composition (basic and acidic residues).

Belongs to the major facilitator superfamily. Sodium/anion cotransporter family. VGLUT subfamily. Expressed in amygdala, cerebellum, hippocampus, medulla, spinal cord and thalamus.

The protein resides in the cytoplasmic vesicle. It localises to the secretory vesicle. The protein localises to the synaptic vesicle membrane. It is found in the cell membrane. Its subcellular location is the synapse. The protein resides in the synaptosome. The catalysed reaction is L-glutamate(out) = L-glutamate(in). It catalyses the reaction 3 Na(+)(out) + phosphate(out) = 3 Na(+)(in) + phosphate(in). It carries out the reaction chloride(in) = chloride(out). The L-glutamate uniporter activity exhibits a biphasic dependence on chloride concentration. Chloride channel activity is allosterically activated by lumenal H(+) and Cl(-) leading to synaptic vesicles acidification. The glutamate transport activity is allosterically activated by lumenal H(+) and Cl(-), preventing non-vesicular L-glutamate release. Functionally, multifunctional transporter that transports L-glutamate as well as multiple ions such as chloride, sodium and phosphate. At the synaptic vesicle membrane, mainly functions as an uniporter that mediates the uptake of L-glutamate into synaptic vesicles at presynaptic nerve terminals of excitatory neural cells. The L-glutamate uniporter activity is electrogenic and is driven by the proton electrochemical gradient, mainly by the electrical gradient established by the vacuolar H(+)-ATPase across the synaptic vesicle membrane. In addition, functions as a chloride channel that allows a chloride permeation through the synaptic vesicle membrane that affects the proton electrochemical gradient and promotes synaptic vesicles acidification. At the plasma membrane, following exocytosis, functions as a symporter of Na(+) and phosphate from the extracellular space to the cytoplasm allowing synaptic phosphate homeostasis regulation. The symporter activity is electrogenic. Moreover, operates synergistically with SLC18A3/VACHT under a constant H(+) gradient, thereby allowing striatal vesicular acetylcholine uptake. The polypeptide is Vesicular glutamate transporter 3 (Homo sapiens (Human)).